The primary structure comprises 436 residues: MQVSVETVSNLQRRMTVQVPSERIEQEVDRRLKSLARRVKIDGFRPGKVPLKVVQQRYGAGVFQEVVGEVLQSSYQEALLQEKLEPAGSPSIEPKPLEPGKGLEYTATFDVFPKVEIADLSDVAVERPRVEVSDADVDKVIETLRRQRKEFVAVDRAAQKGDQVIVDFDGSLDGEAFEGGKGEAMPVELGEGRMLAAFEDQLNGMKPGDEKTIDVPFPEDYPAENLKGKTAQFAIKVREVKEPTLPEVDEAFAKSFGIEEGGVEKLREDVRANMEREVAQALKAKVKDQVMQALFKAHPLELPEALVKDEIERLRQQALSRFGGQVKPENFPDEVFREEAVRRVSLGLIIRELVASKGMKVDAGRVKAELEAMAAGYEDPRQVIDYYRNNRQAQSGLEAMVLEDQVVDFVVEQGKATDKPMSFDELMNPRKEGASE.

Positions 161 to 246 (GDQVIVDFDG…VREVKEPTLP (86 aa)) constitute a PPIase FKBP-type domain.

Belongs to the FKBP-type PPIase family. Tig subfamily.

It is found in the cytoplasm. The catalysed reaction is [protein]-peptidylproline (omega=180) = [protein]-peptidylproline (omega=0). Functionally, involved in protein export. Acts as a chaperone by maintaining the newly synthesized protein in an open conformation. Functions as a peptidyl-prolyl cis-trans isomerase. The polypeptide is Trigger factor (Thioalkalivibrio sulfidiphilus (strain HL-EbGR7)).